Here is a 145-residue protein sequence, read N- to C-terminus: Protein phosphatase 1 regulatory subunit 14D (145 aa).

Residues 1–14 (MLSSSPASCTSPSP) show a composition bias toward low complexity. Residues 1 to 59 (MLSSSPASCTSPSPDGENPCKKVHWASGRRRTSSTDSESKSHPDSSKIPRSRRPSRLTV) are disordered. The interval 21–25 (KKVHW) is interaction with protein phosphatase 1. The segment covering 21-32 (KKVHWASGRRRT) has biased composition (basic residues). Residues 37 to 47 (SESKSHPDSSK) are compositionally biased toward basic and acidic residues. A Phosphothreonine modification is found at T58.

The protein belongs to the PP1 inhibitor family. Post-translationally, phosphorylated on several residues. In terms of tissue distribution, detected in colon, intestine, kidney and brain cortex.

Its subcellular location is the cytoplasm. In terms of biological role, inhibitor of PPP1CA. Has inhibitory activity only when phosphorylated, creating a molecular switch for regulating the phosphorylation status of PPP1CA substrates and smooth muscle contraction. The chain is Protein phosphatase 1 regulatory subunit 14D (PPP1R14D) from Homo sapiens (Human).